A 63-amino-acid polypeptide reads, in one-letter code: MNKVHFALFLLVLTVLAVSGFPSENAPTGGCPLSDNVCSSYCKKNKFGNEGKCHGTICKCSIK.

The first 20 residues, 1-20 (MNKVHFALFLLVLTVLAVSG), serve as a signal peptide directing secretion. Cystine bridges form between cysteine 31/cysteine 53, cysteine 38/cysteine 58, and cysteine 42/cysteine 60.

The protein belongs to the long chain scorpion toxin family. Class 2 subfamily. In terms of tissue distribution, expressed by the venom gland.

It localises to the secreted. Its function is as follows. This recombinant toxin selectively inhibits mouse voltage-gated potassium channel Kv1.3/KCNA3 (IC(50)=24.73 nM). In Scorpiops pococki (Scorpion), this protein is Potassium channel toxin Sp4.